A 273-amino-acid polypeptide reads, in one-letter code: Ribosomal RNA small subunit methyltransferase A (273 aa).

Positions 19, 21, 46, 67, 92, and 113 each coordinate S-adenosyl-L-methionine.

Belongs to the class I-like SAM-binding methyltransferase superfamily. rRNA adenine N(6)-methyltransferase family. RsmA subfamily.

The protein resides in the cytoplasm. It catalyses the reaction adenosine(1518)/adenosine(1519) in 16S rRNA + 4 S-adenosyl-L-methionine = N(6)-dimethyladenosine(1518)/N(6)-dimethyladenosine(1519) in 16S rRNA + 4 S-adenosyl-L-homocysteine + 4 H(+). Specifically dimethylates two adjacent adenosines (A1518 and A1519) in the loop of a conserved hairpin near the 3'-end of 16S rRNA in the 30S particle. May play a critical role in biogenesis of 30S subunits. This is Ribosomal RNA small subunit methyltransferase A from Hahella chejuensis (strain KCTC 2396).